The sequence spans 538 residues: Adenine deaminase (538 aa).

This sequence belongs to the metallo-dependent hydrolases superfamily. Adenine deaminase family. Mn(2+) is required as a cofactor.

It carries out the reaction adenine + H2O + H(+) = hypoxanthine + NH4(+). This is Adenine deaminase from Methanothermobacter thermautotrophicus (strain ATCC 29096 / DSM 1053 / JCM 10044 / NBRC 100330 / Delta H) (Methanobacterium thermoautotrophicum).